Reading from the N-terminus, the 278-residue chain is Large ribosomal subunit protein uL2 (278 aa).

The segment at 201-278 (HGNINDGKAG…IMRSRHQRKK (78 aa)) is disordered. Residues 210–221 (GRSRWRGKRPHV) show a composition bias toward basic residues.

This sequence belongs to the universal ribosomal protein uL2 family. As to quaternary structure, part of the 50S ribosomal subunit. Forms a bridge to the 30S subunit in the 70S ribosome.

One of the primary rRNA binding proteins. Required for association of the 30S and 50S subunits to form the 70S ribosome, for tRNA binding and peptide bond formation. It has been suggested to have peptidyltransferase activity; this is somewhat controversial. Makes several contacts with the 16S rRNA in the 70S ribosome. This chain is Large ribosomal subunit protein uL2, found in Sinorhizobium fredii (strain NBRC 101917 / NGR234).